The following is a 204-amino-acid chain: Large ribosomal subunit protein uL4 (204 aa).

The disordered stretch occupies residues 49 to 76 (KTKGISDVSGTTAKPYGQKRTGRARQGS).

The protein belongs to the universal ribosomal protein uL4 family. As to quaternary structure, part of the 50S ribosomal subunit.

One of the primary rRNA binding proteins, this protein initially binds near the 5'-end of the 23S rRNA. It is important during the early stages of 50S assembly. It makes multiple contacts with different domains of the 23S rRNA in the assembled 50S subunit and ribosome. Functionally, forms part of the polypeptide exit tunnel. This Wolbachia pipientis wMel protein is Large ribosomal subunit protein uL4.